Here is a 416-residue protein sequence, read N- to C-terminus: Isobutyryl-CoA dehydrogenase, mitochondrial (416 aa).

A mitochondrion-targeting transit peptide spans 1–23 (MMLRGGCQRVGARLRGLRRGPRG). Lys-51 is modified (N6-acetyllysine; alternate). Lys-51 is modified (N6-succinyllysine; alternate). Residues 159-168 (YCLTEPGSGS) and 192-194 (FIS) contribute to the FAD site. Ser-168 lines the substrate pocket. Lys-232 bears the N6-acetyllysine mark. Lys-272 bears the N6-succinyllysine mark. 275–278 (NGGR) provides a ligand contact to substrate. Residues Arg-303, 313-314 (SQ), and 372-376 (QMHGG) contribute to the FAD site. The active-site Proton acceptor is the Glu-399. 401 to 403 (SNE) contributes to the FAD binding site. Substrate is bound at residue Arg-411.

Belongs to the acyl-CoA dehydrogenase family. In terms of assembly, homotetramer, formed by a dimer of dimers. It depends on FAD as a cofactor.

The protein localises to the mitochondrion. The enzyme catalyses 2-methylpropanoyl-CoA + oxidized [electron-transfer flavoprotein] + H(+) = 2-methylpropenoyl-CoA + reduced [electron-transfer flavoprotein]. The catalysed reaction is (2S)-2-methylbutanoyl-CoA + oxidized [electron-transfer flavoprotein] + H(+) = (2E)-2-methylbut-2-enoyl-CoA + reduced [electron-transfer flavoprotein]. It catalyses the reaction propanoyl-CoA + oxidized [electron-transfer flavoprotein] + H(+) = acryloyl-CoA + reduced [electron-transfer flavoprotein]. The protein operates within amino-acid degradation; L-valine degradation. Functionally, isobutyryl-CoA dehydrogenase which catalyzes the conversion of 2-methylpropanoyl-CoA to (2E)-2-methylpropenoyl-CoA in the valine catabolic pathway. To a lesser extent, also able to catalyze the oxidation of (2S)-2-methylbutanoyl-CoA. The chain is Isobutyryl-CoA dehydrogenase, mitochondrial (ACAD8) from Bos taurus (Bovine).